A 173-amino-acid chain; its full sequence is Adenine phosphoribosyltransferase (173 aa).

It belongs to the purine/pyrimidine phosphoribosyltransferase family. Homodimer.

It localises to the cytoplasm. The enzyme catalyses AMP + diphosphate = 5-phospho-alpha-D-ribose 1-diphosphate + adenine. Its pathway is purine metabolism; AMP biosynthesis via salvage pathway; AMP from adenine: step 1/1. Catalyzes a salvage reaction resulting in the formation of AMP, that is energically less costly than de novo synthesis. The chain is Adenine phosphoribosyltransferase from Thermotoga maritima (strain ATCC 43589 / DSM 3109 / JCM 10099 / NBRC 100826 / MSB8).